The sequence spans 729 residues: uncharacterized protein (729 aa).

Belongs to the mimivirus L515/L516 family.

Its subcellular location is the virion. This is an uncharacterized protein from Acanthamoeba polyphaga mimivirus (APMV).